The primary structure comprises 207 residues: Guanylate kinase (207 aa).

Positions 4–184 constitute a Guanylate kinase-like domain; it reads NMYYAISAPS…TLNKIKTIII (181 aa). ATP is bound at residue 11–18; the sequence is APSGTGKS.

This sequence belongs to the guanylate kinase family.

It is found in the cytoplasm. The enzyme catalyses GMP + ATP = GDP + ADP. In terms of biological role, essential for recycling GMP and indirectly, cGMP. This chain is Guanylate kinase, found in Wigglesworthia glossinidia brevipalpis.